Here is a 163-residue protein sequence, read N- to C-terminus: Nucleotide-binding protein LA_3406 (163 aa).

It belongs to the YajQ family.

Functionally, nucleotide-binding protein. The polypeptide is Nucleotide-binding protein LA_3406 (Leptospira interrogans serogroup Icterohaemorrhagiae serovar Lai (strain 56601)).